We begin with the raw amino-acid sequence, 217 residues long: Deoxyribose-phosphate aldolase (217 aa).

The Proton donor/acceptor role is filled by Asp89. Lys151 (schiff-base intermediate with acetaldehyde) is an active-site residue. The active-site Proton donor/acceptor is Lys180.

It belongs to the DeoC/FbaB aldolase family. DeoC type 1 subfamily.

It is found in the cytoplasm. The enzyme catalyses 2-deoxy-D-ribose 5-phosphate = D-glyceraldehyde 3-phosphate + acetaldehyde. The protein operates within carbohydrate degradation; 2-deoxy-D-ribose 1-phosphate degradation; D-glyceraldehyde 3-phosphate and acetaldehyde from 2-deoxy-alpha-D-ribose 1-phosphate: step 2/2. Catalyzes a reversible aldol reaction between acetaldehyde and D-glyceraldehyde 3-phosphate to generate 2-deoxy-D-ribose 5-phosphate. In Metamycoplasma arthritidis (strain 158L3-1) (Mycoplasma arthritidis), this protein is Deoxyribose-phosphate aldolase.